The chain runs to 69 residues: DNA-directed RNA polymerase subunit omega (69 aa).

The protein belongs to the RNA polymerase subunit omega family. The RNAP catalytic core consists of 2 alpha, 1 beta, 1 beta' and 1 omega subunit. When a sigma factor is associated with the core the holoenzyme is formed, which can initiate transcription.

It carries out the reaction RNA(n) + a ribonucleoside 5'-triphosphate = RNA(n+1) + diphosphate. Promotes RNA polymerase assembly. Latches the N- and C-terminal regions of the beta' subunit thereby facilitating its interaction with the beta and alpha subunits. The sequence is that of DNA-directed RNA polymerase subunit omega from Exiguobacterium sp. (strain ATCC BAA-1283 / AT1b).